We begin with the raw amino-acid sequence, 285 residues long: 2-dehydro-3-deoxyphosphooctonate aldolase (285 aa).

It belongs to the KdsA family.

The protein resides in the cytoplasm. The catalysed reaction is D-arabinose 5-phosphate + phosphoenolpyruvate + H2O = 3-deoxy-alpha-D-manno-2-octulosonate-8-phosphate + phosphate. It functions in the pathway carbohydrate biosynthesis; 3-deoxy-D-manno-octulosonate biosynthesis; 3-deoxy-D-manno-octulosonate from D-ribulose 5-phosphate: step 2/3. It participates in bacterial outer membrane biogenesis; lipopolysaccharide biosynthesis. The sequence is that of 2-dehydro-3-deoxyphosphooctonate aldolase from Acidovorax ebreus (strain TPSY) (Diaphorobacter sp. (strain TPSY)).